A 33-amino-acid chain; its full sequence is Cytochrome b6-f complex subunit 6 (33 aa).

A helical membrane pass occupies residues 4-24 (ITIISYFGLLLASIIFTLVLF).

Belongs to the PetL family. The 4 large subunits of the cytochrome b6-f complex are cytochrome b6, subunit IV (17 kDa polypeptide, PetD), cytochrome f and the Rieske protein, while the 4 small subunits are PetG, PetL, PetM and PetN. The complex functions as a dimer.

The protein resides in the plastid. Its subcellular location is the chloroplast thylakoid membrane. Component of the cytochrome b6-f complex, which mediates electron transfer between photosystem II (PSII) and photosystem I (PSI), cyclic electron flow around PSI, and state transitions. PetL is important for photoautotrophic growth as well as for electron transfer efficiency and stability of the cytochrome b6-f complex. The sequence is that of Cytochrome b6-f complex subunit 6 from Pinus mugo (Dwarf mountain pine).